A 238-amino-acid chain; its full sequence is Ribitol-5-phosphate cytidylyltransferase (238 aa).

CTP-binding positions include 7 to 10 (LAGG) and 81 to 87 (GDDRNHT).

This sequence belongs to the IspD/TarI cytidylyltransferase family. TarI subfamily.

It carries out the reaction D-ribitol 5-phosphate + CTP + H(+) = CDP-L-ribitol + diphosphate. It functions in the pathway cell wall biogenesis; poly(ribitol phosphate) teichoic acid biosynthesis. Catalyzes the transfer of the cytidylyl group of CTP to D-ribitol 5-phosphate. In Staphylococcus epidermidis (strain ATCC 35984 / DSM 28319 / BCRC 17069 / CCUG 31568 / BM 3577 / RP62A), this protein is Ribitol-5-phosphate cytidylyltransferase.